Consider the following 240-residue polypeptide: MQRSKTYRAAAESFDKDELYAPLAAIKIAKTSSKKKFDETVDVVMRLGVDPRKADQMVRGTVNLPHGTGKTARVLVFANADKAEAAREAGADVVGGDELIDKVAGGWLDFDAVVATPDMMGKVGRLGRVLGPRGLMPNPKTGTVTPDVAKAVSDIKGGKIEFRVDRHANLHFIIGKASFGEVQLAENYAAALEEVLRLKPASSKGRYIKKITVSTTMGPGIQVDPNRTRNVALEDENAQP.

It belongs to the universal ribosomal protein uL1 family. Part of the 50S ribosomal subunit.

Functionally, binds directly to 23S rRNA. The L1 stalk is quite mobile in the ribosome, and is involved in E site tRNA release. In terms of biological role, protein L1 is also a translational repressor protein, it controls the translation of the L11 operon by binding to its mRNA. This Nocardioides sp. (strain ATCC BAA-499 / JS614) protein is Large ribosomal subunit protein uL1.